The chain runs to 186 residues: Protein C (186 aa).

Residues methionine 1 to serine 12 show a composition bias toward polar residues. Positions methionine 1 to alanine 43 are disordered.

This sequence belongs to the morbillivirus protein C family. As to quaternary structure, interacts with the phosphoprotein (via C-terminus); this interaction allows C to associate with the ribonucleocapsid.

It localises to the host nucleus. Its subcellular location is the host cytoplasmic vesicle. Functionally, ribonucleocapsid-associated protein that interacts with the phosphoprotein (P), thereby increasing replication accuracy and processivity of the polymerase complex. The protein is Protein C (P/V/C) of Homo sapiens (Human).